A 254-amino-acid chain; its full sequence is Isoprenyl transferase (254 aa).

Residue aspartate 34 is part of the active site. Aspartate 34 provides a ligand contact to Mg(2+). Residues 35-38, tryptophan 39, arginine 47, histidine 51, and 79-81 contribute to the substrate site; these read GNGR and STE. Residue asparagine 82 is the Proton acceptor of the active site. Substrate contacts are provided by residues tryptophan 83, arginine 85, arginine 202, and 208-210; that span reads RIS. Glutamate 221 serves as a coordination point for Mg(2+).

This sequence belongs to the UPP synthase family. As to quaternary structure, homodimer. Requires Mg(2+) as cofactor.

Catalyzes the condensation of isopentenyl diphosphate (IPP) with allylic pyrophosphates generating different type of terpenoids. This Staphylococcus saprophyticus subsp. saprophyticus (strain ATCC 15305 / DSM 20229 / NCIMB 8711 / NCTC 7292 / S-41) protein is Isoprenyl transferase.